Here is a 256-residue protein sequence, read N- to C-terminus: Small ribosomal subunit protein uS2 (256 aa).

The protein belongs to the universal ribosomal protein uS2 family.

In Methylococcus capsulatus (strain ATCC 33009 / NCIMB 11132 / Bath), this protein is Small ribosomal subunit protein uS2.